A 231-amino-acid chain; its full sequence is Endonuclease NucS (231 aa).

The protein belongs to the NucS endonuclease family.

The protein resides in the cytoplasm. Cleaves both 3' and 5' ssDNA extremities of branched DNA structures. In Arthrobacter sp. (strain FB24), this protein is Endonuclease NucS.